Here is a 430-residue protein sequence, read N- to C-terminus: Adenylosuccinate synthetase (430 aa).

Residues 13–19 (GDEGKGK) and 41–43 (GHT) contribute to the GTP site. Asp14 (proton acceptor) is an active-site residue. Mg(2+) contacts are provided by Asp14 and Gly41. IMP is bound by residues 14-17 (DEGK), 39-42 (NAGH), Thr130, Arg144, Gln225, Thr240, and Arg304. The active-site Proton donor is His42. 300 to 306 (ASTGRPR) is a substrate binding site. Residues Arg306, 332 to 334 (KLD), and 414 to 416 (STG) contribute to the GTP site.

It belongs to the adenylosuccinate synthetase family. In terms of assembly, homodimer. Mg(2+) is required as a cofactor.

It is found in the cytoplasm. The catalysed reaction is IMP + L-aspartate + GTP = N(6)-(1,2-dicarboxyethyl)-AMP + GDP + phosphate + 2 H(+). It participates in purine metabolism; AMP biosynthesis via de novo pathway; AMP from IMP: step 1/2. In terms of biological role, plays an important role in the de novo pathway of purine nucleotide biosynthesis. Catalyzes the first committed step in the biosynthesis of AMP from IMP. This is Adenylosuccinate synthetase from Stenotrophomonas maltophilia (strain R551-3).